Consider the following 118-residue polypeptide: Aspartate 1-decarboxylase (118 aa).

Catalysis depends on S25, which acts as the Schiff-base intermediate with substrate; via pyruvic acid. The residue at position 25 (S25) is a Pyruvic acid (Ser). T57 lines the substrate pocket. The active-site Proton donor is Y58. 73-75 contributes to the substrate binding site; that stretch reads GAA.

Belongs to the PanD family. Heterooctamer of four alpha and four beta subunits. It depends on pyruvate as a cofactor. In terms of processing, is synthesized initially as an inactive proenzyme, which is activated by self-cleavage at a specific serine bond to produce a beta-subunit with a hydroxyl group at its C-terminus and an alpha-subunit with a pyruvoyl group at its N-terminus.

The protein localises to the cytoplasm. It catalyses the reaction L-aspartate + H(+) = beta-alanine + CO2. Its pathway is cofactor biosynthesis; (R)-pantothenate biosynthesis; beta-alanine from L-aspartate: step 1/1. Its function is as follows. Catalyzes the pyruvoyl-dependent decarboxylation of aspartate to produce beta-alanine. This chain is Aspartate 1-decarboxylase, found in Hyphomonas neptunium (strain ATCC 15444).